A 188-amino-acid chain; its full sequence is MSLIGTEVQPFRAQAFQSGKDFFEVTEADLKGKWSIVVFYPADFSFVCPTELEDVQKEYAELKKLGVEVYSVSTDTHFVHKAWHENSPAVGSIEYIMIGDPSQTISRQFDVLNEETGLADRGTFIIDPDGVIQAIEINADGIGRDASTLINKVKAAQYVRENPGEVCPAKWEEGGETLKPSLDIVGKI.

The Thioredoxin domain occupies 2 to 158; it reads SLIGTEVQPF…LINKVKAAQY (157 aa). Cysteine 48 (cysteine sulfenic acid (-SOH) intermediate) is an active-site residue.

It belongs to the peroxiredoxin family. AhpC/Prx1 subfamily. As to quaternary structure, homodimer; disulfide-linked, upon oxidation. 5 homodimers assemble to form a ring-like decamer.

It is found in the cytoplasm. It catalyses the reaction a hydroperoxide + NADH + H(+) = an alcohol + NAD(+) + H2O. Functionally, thiol-specific peroxidase that catalyzes the reduction of hydrogen peroxide and organic hydroperoxides to water and alcohols, respectively. Plays a role in cell protection against oxidative stress by detoxifying peroxides. The protein is Alkyl hydroperoxide reductase C (ahpC) of Amphibacillus xylanus (strain ATCC 51415 / DSM 6626 / JCM 7361 / LMG 17667 / NBRC 15112 / Ep01).